The sequence spans 63 residues: Large ribosomal subunit protein uL29 (63 aa).

The protein belongs to the universal ribosomal protein uL29 family.

This Aggregatibacter actinomycetemcomitans (Actinobacillus actinomycetemcomitans) protein is Large ribosomal subunit protein uL29 (rpmC).